A 1909-amino-acid polypeptide reads, in one-letter code: NFX1-type zinc finger-containing protein 1 (1909 aa).

Basic and acidic residues-rich tracts occupy residues 1-12 and 76-107; these read MEDRRPHLEARP and RNQEGHTSDEARDQRQSQNDTRRRNDDQEGRS. Disordered stretches follow at residues 1 to 133 and 787 to 813; these read MEDR…QPQQ and TQSASPAGPENTAQAEGEEEEEGEEEG. The segment covering 113–122 has biased composition (polar residues); sequence SSDTFQQWHT. Over residues 802-813 the composition is skewed to acidic residues; sequence EGEEEEEGEEEG. A coiled-coil region spans residues 939 to 964; that stretch reads RRRILSYERQYRTWAERMAELRLQED. 4 NF-X1-type zinc fingers span residues 1291–1313, 1375–1393, 1433–1455, and 1463–1480; these read CGHVCTRACHPYDSSHKEFQCMK, CGHRCSHLCGEDCVRLCSE, CGHPCPGSCHSCFEGRFHERCQQ, and CSHKCQEPCTGECPPCQR. Residues 1733–1764 adopt a coiled-coil conformation; the sequence is LAKKRLSFSSQELSDLQSEIQRLTYLVNLLMR. The RZ-type zinc-finger motif lies at 1818 to 1889; sequence ISDEERVQIV…LASEMDGAQH (72 aa). Zn(2+) is bound by residues Cys1840, His1844, Cys1860, and Cys1863.

It belongs to the ZNFX1 family. Interacts with MAVS.

Its subcellular location is the mitochondrion outer membrane. It is found in the cytoplasm. It localises to the stress granule. Functionally, RNA-binding protein that initiates the antiviral response and is required to restrict the replication of RNA viruses. Acts as a double-stranded RNA (dsRNA) sensor that recognizes viral RNA and then interacts with MAVS to initiate the type I interferon response. Also required for immunity against some bacteria, such as mycobacteria. This chain is NFX1-type zinc finger-containing protein 1, found in Mus musculus (Mouse).